Here is a 709-residue protein sequence, read N- to C-terminus: Probable serine/threonine-protein kinase zyg-1 (709 aa).

The region spanning 13–251 is the Protein kinase domain; the sequence is FQNLQQIGQG…LKEIVMTDYV (239 aa). ATP contacts are provided by residues 19-27 and Lys-41; that span reads IGQGGFGVV. The active-site Proton acceptor is the Asp-130. Disordered stretches follow at residues 254–329 and 591–633; these read KMGE…DRAR and SSSQ…PAAT. 2 stretches are compositionally biased toward basic and acidic residues: residues 262–291 and 302–313; these read SREH…ERRP and SRRDPDGYRAAH. The span at 607–627 shows a compositional bias: polar residues; the sequence is PLSSRTTSSLNVRNGVSSDEN.

The protein belongs to the protein kinase superfamily. Ser/Thr protein kinase family.

Its subcellular location is the cytoplasm. The protein localises to the cytoskeleton. It localises to the microtubule organizing center. The protein resides in the centrosome. It is found in the centriole. The enzyme catalyses L-seryl-[protein] + ATP = O-phospho-L-seryl-[protein] + ADP + H(+). It catalyses the reaction L-threonyl-[protein] + ATP = O-phospho-L-threonyl-[protein] + ADP + H(+). In terms of biological role, protein kinase that plays a central role in centrosome duplication. Paternal copy is required to regulate synthesis of daughter centrioles prior to fertilization. Maternal copy regulates centrosome duplication during later cell cycles. Functions upstream of sas-5 and sas-6, and is required for their localization to the centrosome. The sequence is that of Probable serine/threonine-protein kinase zyg-1 (zyg-1) from Caenorhabditis briggsae.